Reading from the N-terminus, the 308-residue chain is Ribosomal RNA small subunit methyltransferase H (308 aa).

S-adenosyl-L-methionine-binding positions include 38 to 40 (GGH), D58, F82, D99, and Q106.

The protein belongs to the methyltransferase superfamily. RsmH family.

The protein resides in the cytoplasm. It carries out the reaction cytidine(1402) in 16S rRNA + S-adenosyl-L-methionine = N(4)-methylcytidine(1402) in 16S rRNA + S-adenosyl-L-homocysteine + H(+). Its function is as follows. Specifically methylates the N4 position of cytidine in position 1402 (C1402) of 16S rRNA. The sequence is that of Ribosomal RNA small subunit methyltransferase H from Acidovorax sp. (strain JS42).